Reading from the N-terminus, the 98-residue chain is ESAT-6-like protein EsxK (98 aa).

It belongs to the WXG100 family. CFP-10 subfamily. In terms of assembly, strongly interacts with EsxL to form a heterodimeric complex under reducing conditions.

The protein localises to the secreted. The protein is ESAT-6-like protein EsxK of Mycobacterium tuberculosis (strain CDC 1551 / Oshkosh).